Reading from the N-terminus, the 379-residue chain is Cytochrome-c peroxidase IdrP1 (379 aa).

Positions Met-1–Ala-24 are cleaved as a signal peptide. Cytochrome c domains are found at residues Glu-50–Lys-158 and Thr-204–Ser-355. Cys-72, Cys-75, His-76, Cys-219, Cys-222, and His-223 together coordinate heme c.

In terms of assembly, the iodate reductase (Idr) complex is composed of a molybdopterin-dependent iodate reductase (IdrA and IdrB subunits) and two associated peroxidases (IdrP1 and IdrP2). Heme c is required as a cofactor.

The protein resides in the periplasm. It catalyses the reaction 2 Fe(II)-[cytochrome c] + H2O2 + 2 H(+) = 2 Fe(III)-[cytochrome c] + 2 H2O. Involved in iodate respiration. Probably reduces the H(2)O(2) produced by IdrA/IdrB to H(2)O, using a reduced cytochrome c as the electron donor. This Pseudomonas sp. (strain SCT) protein is Cytochrome-c peroxidase IdrP1.